The sequence spans 225 residues: Uracil-DNA glycosylase (225 aa).

Asp-65 serves as the catalytic Proton acceptor.

It belongs to the uracil-DNA glycosylase (UDG) superfamily. UNG family.

It is found in the cytoplasm. It carries out the reaction Hydrolyzes single-stranded DNA or mismatched double-stranded DNA and polynucleotides, releasing free uracil.. Excises uracil residues from the DNA which can arise as a result of misincorporation of dUMP residues by DNA polymerase or due to deamination of cytosine. This is Uracil-DNA glycosylase from Clostridium perfringens (strain 13 / Type A).